A 277-amino-acid polypeptide reads, in one-letter code: Small ribosomal subunit protein uS2 (277 aa).

Residues leucine 254 to alanine 277 form a disordered region.

It belongs to the universal ribosomal protein uS2 family.

The chain is Small ribosomal subunit protein uS2 (rpsB) from Mycobacterium leprae (strain TN).